A 428-amino-acid polypeptide reads, in one-letter code: Tyrosine--tRNA ligase (428 aa).

Tyrosine 41 contacts L-tyrosine. A 'HIGH' region motif is present at residues 46 to 55 (PTADSLHLGH). L-tyrosine-binding residues include tyrosine 179 and glutamine 183. Positions 239–243 (KFGKT) match the 'KMSKS' region motif. Lysine 242 is an ATP binding site. The S4 RNA-binding domain maps to 361 to 418 (ADLMQALVDSELQPSRGQARKTIASNAVTINGEKQSDPEYFFQDSDILFGRYTLLRRG).

The protein belongs to the class-I aminoacyl-tRNA synthetase family. TyrS type 1 subfamily. In terms of assembly, homodimer.

The protein resides in the cytoplasm. The catalysed reaction is tRNA(Tyr) + L-tyrosine + ATP = L-tyrosyl-tRNA(Tyr) + AMP + diphosphate + H(+). Its function is as follows. Catalyzes the attachment of tyrosine to tRNA(Tyr) in a two-step reaction: tyrosine is first activated by ATP to form Tyr-AMP and then transferred to the acceptor end of tRNA(Tyr). The protein is Tyrosine--tRNA ligase of Citrobacter koseri (strain ATCC BAA-895 / CDC 4225-83 / SGSC4696).